A 328-amino-acid chain; its full sequence is Carbonic anhydrase-related protein 11 (328 aa).

Positions 1-23 are cleaved as a signal peptide; it reads MGGAARLSAPQALVLWAALGAAA. The region spanning 33–303 is the Alpha-carbonic anhydrase domain; sequence DWWSYKENLQ…LAHRALRGNR (271 aa). A glycan (N-linked (GlcNAc...) asparagine) is linked at Asn118. Residues 300 to 328 form a disordered region; sequence RGNRDPRHPERRCRGPNYRLHVDGGPHGR. Over residues 319-328 the composition is skewed to basic and acidic residues; the sequence is LHVDGGPHGR.

It belongs to the alpha-carbonic anhydrase family.

It is found in the secreted. Functionally, does not have a catalytic activity. The polypeptide is Carbonic anhydrase-related protein 11 (Ca11) (Mus musculus (Mouse)).